We begin with the raw amino-acid sequence, 592 residues long: A-type ATP synthase subunit A (592 aa).

Position 234–241 (234–241) interacts with ATP; sequence GAFGTGKT.

This sequence belongs to the ATPase alpha/beta chains family. Has multiple subunits with at least A(3), B(3), C, D, E, F, H, I and proteolipid K(x).

It localises to the cell membrane. It catalyses the reaction ATP + H2O + 4 H(+)(in) = ADP + phosphate + 5 H(+)(out). In terms of biological role, component of the A-type ATP synthase that produces ATP from ADP in the presence of a proton gradient across the membrane. The A chain is the catalytic subunit. The protein is A-type ATP synthase subunit A of Nitrosopumilus maritimus (strain SCM1).